We begin with the raw amino-acid sequence, 756 residues long: MKGKTVNKQTLAALVSALLVFNPAVADEQESAQMTKPKGAAATGTAKAFQPKSKQFWWPDQLDLSPLRDHDSRSNPYGESFDYAKAFNSLDLDQVKADIDQLLTQSQDWWPADYGNYGPFFIRMTWHSAGTYRTLDGRGGAGGGQQRFEPLNSWPDNASLDKARRLLWPVKQKYGEALSWSDLIVLAGNVALENMGFKTFGFAGGRNDDWEPDMVYWGPEVEMLASDREDRDGKLQRPLGATHMGLIYVNPEGPKGVPDPLGSAKNIRTAFSRMAMNDEETLALIAGGHTFGKMHGAHKPKDCLGAEPAAAGIEAQGLGWHNKCGKGHSEDTITSGLEGAWTQAPTKWTSLYLSNLLTYDWQQTRSPAGAIQWIPTDESVHKAVPDAHVKGKFHAPVMTTADLALKYDPEYRKIAERFLADPEEYRLAFAKAWYKLTHRDMGPARNFLGKEVPQGNFIWQDPIDDKTQSRLSAGDIKQLKKAISKSGLSVAERVRLAWASAASYRQSDMRGGANGARIALAPQKDWTVNNPAETAKVLKTLEAIRADFNKGAGKRQVSLADLIVLAGASALEQAAKQAGFEVAVPFTPGRGDATQAQTDENSFSLLELHADGFRNYFDVNHSYKSPTEMLVDKADQLDLTVPEMTVLVGGLRALDANYQGAKHGVLTQRPGTLNNDFFVNLLDMSTLWQKSDVDGIYQGLDRSSGKPKWTATSVDLIFGSNSELRAVAEVYAFDTSKQKFVDDFVAAWVKVMNLDR.

An N-terminal signal peptide occupies residues 1–26; that stretch reads MKGKTVNKQTLAALVSALLVFNPAVA. The segment at residues 126 to 248 is a cross-link (tryptophyl-tyrosyl-methioninium (Trp-Tyr) (with M-274)); that stretch reads WHSAGTYRTL…LGATHMGLIY (123 aa). Residue H127 is the Proton acceptor of the active site. The tryptophyl-tyrosyl-methioninium (Tyr-Met) (with W-126) cross-link spans 248-274; that stretch reads YVNPEGPKGVPDPLGSAKNIRTAFSRM. A heme b-binding site is contributed by H289.

Belongs to the peroxidase family. Peroxidase/catalase subfamily. Homodimer or homotetramer. Requires heme b as cofactor. In terms of processing, formation of the three residue Trp-Tyr-Met cross-link is important for the catalase, but not the peroxidase activity of the enzyme.

It catalyses the reaction H2O2 + AH2 = A + 2 H2O. The enzyme catalyses 2 H2O2 = O2 + 2 H2O. Bifunctional enzyme with both catalase and broad-spectrum peroxidase activity. The chain is Catalase-peroxidase from Shewanella loihica (strain ATCC BAA-1088 / PV-4).